Reading from the N-terminus, the 879-residue chain is Metabotropic glutamate receptor 3 (879 aa).

Positions 1 to 22 (MKMLTRLQVLTLALFSKGFLLS) are cleaved as a signal peptide. The Extracellular segment spans residues 23-576 (LGDHNFLRRE…EDYIRWEDAW (554 aa)). C57 and C99 are disulfide-bonded. L-glutamate is bound by residues S151 and 172-174 (AST). Residue N209 is glycosylated (N-linked (GlcNAc...) asparagine). L-glutamate is bound at residue Y222. Intrachain disulfides connect C240/C527, C361/C373, C412/C419, C509/C528, C513/C531, C534/C546, and C549/C562. The N-linked (GlcNAc...) asparagine glycan is linked to N292. Residue D301 participates in L-glutamate binding. Position 389 (K389) interacts with L-glutamate. Residues N414 and N439 are each glycosylated (N-linked (GlcNAc...) asparagine). A helical membrane pass occupies residues 577-599 (VIGPVTIACLGFMCTCMVVTVFI). The Cytoplasmic portion of the chain corresponds to 600-613 (KHNNTPLVKASGRE). Residues 614–634 (LCYILLFGVGLSYCMTFFFIA) form a helical membrane-spanning segment. Residues 635–645 (KPSPVICALRR) lie on the Extracellular side of the membrane. Residues 646 to 664 (LGLGSSFAICYSALLTKTN) form a helical membrane-spanning segment. The Cytoplasmic segment spans residues 665–688 (CIARIFDGVKNGAQRPKFISPSSQ). Residues 689–709 (VFICLGLILVQIVMVSVWLIL) form a helical membrane-spanning segment. The Extracellular segment spans residues 710-734 (EAPGTRRYTLAEKRETVILKCNVKD). The helical transmembrane segment at 735–756 (SSMLISLTYDVILVILCTVYAF) threads the bilayer. Residues 757-769 (KTRKCPENFNEAK) are Cytoplasmic-facing. The helical transmembrane segment at 770-792 (FIGFTMYTTCIIWLAFLPIFYVT) threads the bilayer. Topologically, residues 793–802 (SSDYRVQTTT) are extracellular. Residues 803–828 (MCISVSLSGFVVLGCLFAPKVHIILF) form a helical membrane-spanning segment. At 829–879 (QPQKNVVTHRLHLNRFSVSGTGTTYSQSSASTYVPTVCNGREVLDSTTSSL) the chain is on the cytoplasmic side.

This sequence belongs to the G-protein coupled receptor 3 family. In terms of assembly, interacts with TAMALIN.

It is found in the cell membrane. In terms of biological role, G-protein coupled receptor for glutamate. Ligand binding causes a conformation change that triggers signaling via guanine nucleotide-binding proteins (G proteins) and modulates the activity of down-stream effectors. Signaling inhibits adenylate cyclase activity. The chain is Metabotropic glutamate receptor 3 (GRM3) from Pongo abelii (Sumatran orangutan).